A 365-amino-acid polypeptide reads, in one-letter code: Histidinol-phosphate aminotransferase (365 aa).

N6-(pyridoxal phosphate)lysine is present on Lys-220.

This sequence belongs to the class-II pyridoxal-phosphate-dependent aminotransferase family. Histidinol-phosphate aminotransferase subfamily. Homodimer. Requires pyridoxal 5'-phosphate as cofactor.

The enzyme catalyses L-histidinol phosphate + 2-oxoglutarate = 3-(imidazol-4-yl)-2-oxopropyl phosphate + L-glutamate. It functions in the pathway amino-acid biosynthesis; L-histidine biosynthesis; L-histidine from 5-phospho-alpha-D-ribose 1-diphosphate: step 7/9. The sequence is that of Histidinol-phosphate aminotransferase from Xylella fastidiosa (strain 9a5c).